Here is a 364-residue protein sequence, read N- to C-terminus: D-alanine--D-alanine ligase (364 aa).

Residues 141 to 346 (KNLFAQAGLR…YSELIERLIA (206 aa)) form the ATP-grasp domain. 174-229 (EQELGYPCFVKPANAGSSVGISKCKQRDDLKTAFAEAFKYDRKIIIEESIVGREIE) lines the ATP pocket. Positions 300, 313, and 315 each coordinate Mg(2+).

It belongs to the D-alanine--D-alanine ligase family. Mg(2+) is required as a cofactor. The cofactor is Mn(2+).

The protein localises to the cytoplasm. The enzyme catalyses 2 D-alanine + ATP = D-alanyl-D-alanine + ADP + phosphate + H(+). The protein operates within cell wall biogenesis; peptidoglycan biosynthesis. Its function is as follows. Cell wall formation. This Geobacillus thermodenitrificans (strain NG80-2) protein is D-alanine--D-alanine ligase.